Here is a 202-residue protein sequence, read N- to C-terminus: V-type ATP synthase subunit D (202 aa).

The protein belongs to the V-ATPase D subunit family.

In terms of biological role, produces ATP from ADP in the presence of a proton gradient across the membrane. This chain is V-type ATP synthase subunit D (atpD), found in Borreliella burgdorferi (strain ATCC 35210 / DSM 4680 / CIP 102532 / B31) (Borrelia burgdorferi).